The sequence spans 428 residues: C4-dicarboxylate transport protein 1 (428 aa).

The next 8 helical transmembrane spans lie at 5–27 (FYKI…GHFE), 42–64 (IQLI…IAGM), 77–99 (ALLY…GHIF), 150–167 (ILQI…LSAM), 188–210 (IVHV…TIGK), 225–247 (TFYL…LTGF), 314–336 (IFIS…LAVA), and 351–373 (FITL…VLIL).

It belongs to the dicarboxylate/amino acid:cation symporter (DAACS) (TC 2.A.23) family.

Its subcellular location is the cell inner membrane. Its function is as follows. Responsible for the transport of dicarboxylates such as succinate, fumarate, and malate from the periplasm across the membrane. This chain is C4-dicarboxylate transport protein 1 (dctA1), found in Ralstonia nicotianae (strain ATCC BAA-1114 / GMI1000) (Ralstonia solanacearum).